The primary structure comprises 369 residues: Olfactory receptor 2T1 (369 aa).

Topologically, residues 1–76 (MWQEYYFLNV…LFNRKETSGL (76 aa)) are extracellular. An N-linked (GlcNAc...) asparagine glycan is attached at Asn-56. A helical membrane pass occupies residues 77-97 (IFAIISIIFFTALMANGVMIF). The Cytoplasmic segment spans residues 98 to 107 (LIQTDLRLHT). A helical membrane pass occupies residues 108–128 (PMYFLLSHLSLIDMMYISTIV). The Extracellular portion of the chain corresponds to 129–148 (PKMLVNYLLDQRTISFVGCT). Cys-147 and Cys-239 are oxidised to a cystine. A helical membrane pass occupies residues 149 to 169 (AQHFLYLTLVGAEFFLLGLMA). Residues 170–191 (YDRYVAICNPLRYPVLMSRRVC) lie on the Cytoplasmic side of the membrane. The chain crosses the membrane as a helical span at residues 192–212 (WMIIAGSWFGGSLDGFLLTPI). Residues 213-247 (TMSFPFCNSREINHFFCEAPAVLKLACADTALYET) are Extracellular-facing. Residues 248 to 268 (VMYVCCVLMLLIPFSVVLASY) traverse the membrane as a helical segment. Residues 269-286 (ARILTTVQCMSSVEGRKK) lie on the Cytoplasmic side of the membrane. Residues 287–307 (AFATCSSHMTVVSLFYGAAMY) form a helical membrane-spanning segment. The Extracellular portion of the chain corresponds to 308–321 (TYMLPHSYHKPAQD). The helical transmembrane segment at 322–342 (KVLSVFYTILTPMLNPLIYSL) threads the bilayer. Residues 343–369 (RNKDVTGALKRALGRFKGPQRVSGGVF) lie on the Cytoplasmic side of the membrane.

Belongs to the G-protein coupled receptor 1 family.

The protein resides in the cell membrane. Odorant receptor. The sequence is that of Olfactory receptor 2T1 (OR2T1) from Homo sapiens (Human).